Here is a 339-residue protein sequence, read N- to C-terminus: Carboxyvinyl-carboxyphosphonate phosphorylmutase, chloroplastic (339 aa).

The N-terminal 30 residues, 1-30, are a transit peptide targeting the chloroplast; sequence MSMLMAVKTTSLCCSSLNLTASPTFRRNPR.

Belongs to the isocitrate lyase/PEP mutase superfamily.

The protein localises to the plastid. The protein resides in the chloroplast. It carries out the reaction 1-carboxyvinyl carboxyphosphonate + H(+) = 3-(hydrohydroxyphosphoryl)pyruvate + CO2. This is Carboxyvinyl-carboxyphosphonate phosphorylmutase, chloroplastic from Arabidopsis thaliana (Mouse-ear cress).